The sequence spans 210 residues: Phosphoribosyl-dephospho-CoA transferase (210 aa).

Active-site residues include D135 and D137.

This sequence belongs to the MdcG family.

The enzyme catalyses apo-[malonate decarboxylase ACP] + 2'-(5''-triphospho-alpha-D-ribosyl)-3'-dephospho-CoA = holo-[malonate decarboxylase ACP] + diphosphate. Its function is as follows. Transfers 2'-(5-triphosphoribosyl)-3'-dephosphocoenzyme-A to the apo-[acyl-carrier-protein] of the malonate decarboxylase to yield holo-[acyl-carrier-protein]. The protein is Phosphoribosyl-dephospho-CoA transferase of Pseudomonas aeruginosa (strain ATCC 15692 / DSM 22644 / CIP 104116 / JCM 14847 / LMG 12228 / 1C / PRS 101 / PAO1).